The following is a 370-amino-acid chain: Leucine-rich repeat and transmembrane domain-containing protein 2 (370 aa).

Residues 1–35 (MLAPGSSPGQRGRLALQWRQVSWITCWIALYAVEA) form the signal peptide. The 33-residue stretch at 36–68 (LPTCPFSCKCDSRSLEVDCSGLGLTTVPPDVPA) folds into the LRRNT domain. At 36 to 310 (LPTCPFSCKC…PASVRRAMGT (275 aa)) the chain is on the extracellular side. LRR repeat units lie at residues 69 to 90 (ATRTLLLLNNKLSALPSWAFAN), 93 to 114 (SLQRLDLSNNFLDRLPRSIFGD), 117 to 139 (NLTELQLRNNSIRTLDRDLLRHS), 141 to 162 (LLRHLDLSINGLAQLPPGLFDG), and 165 to 186 (ALRSLSLRSNRLQNLDRLTFEP). N-linked (GlcNAc...) asparagine glycosylation occurs at Asn-90. N-linked (GlcNAc...) asparagine glycans are attached at residues Asn-117 and Asn-125. The LRRCT domain maps to 198–252 (NPWECDCNLREFKHWMEWFSYRGGRLDQLACTLPKELRGKDMRMVPMEMFNYCSQ). Asn-257 carries an N-linked (GlcNAc...) asparagine glycan. The tract at residues 261–300 (GLDIPGPPCTKASPEPAKPKPGAEPEPEPSTACPQKQRHR) is disordered. Residues 311–331 (VIIAGVVCGVVCIMMVVAAAY) traverse the membrane as a helical segment. The Cytoplasmic portion of the chain corresponds to 332 to 370 (GCIYASLMAKYHRELKKRQPLMGDPEGEHEDQKQISSVA). The segment at 351–370 (PLMGDPEGEHEDQKQISSVA) is disordered.

The protein localises to the membrane. This is Leucine-rich repeat and transmembrane domain-containing protein 2 (LRTM2) from Homo sapiens (Human).